The sequence spans 3284 residues: Location of vulva defective 1 (3284 aa).

The signal sequence occupies residues 1-21 (MKKSNFFVLLLLAISAIQIDG). Disordered regions lie at residues 226-326 (ESTS…ITST), 350-505 (TTML…GTNP), 623-702 (VASS…ADST), 827-926 (STSE…ASTE), and 1043-1216 (TTTE…SLAT). 2 stretches are compositionally biased toward low complexity: residues 227–326 (STST…ITST) and 350–500 (TTML…TTSS). A compositionally biased stretch (low complexity) spans 827-913 (STSEVTSTTS…PSDSSSASDS (87 aa)). Polar residues predominate over residues 914-926 (MRTTTVDPDASTE). The span at 1043-1057 (TTTETPPTTVSSSDD) shows a compositional bias: low complexity. Residues 1060–1078 (GKTGGTGATGGTGGTGSGG) show a composition bias toward gly residues. Over residues 1079–1104 (SATTLSTGDAVRSTTSGSGSGQSSTG) the composition is skewed to low complexity. Residues 1105–1127 (SGAGGSGTTASGSGSGGSSGTGS) show a composition bias toward gly residues. Polar residues predominate over residues 1128 to 1138 (DGVNSGKTTAL). Residues 1163 to 1192 (GSGSDSNGSSGVSTKSSSGSDTSGSSDSSG) are compositionally biased toward low complexity. Residues 1197–1216 (FSATAQPSTRTTKTRSSLAT) are compositionally biased toward polar residues. The region spanning 2064-2227 (WNNSLQVEII…SVGAFNPTID (164 aa)) is the GAIN-B domain. Cys2181 and Cys2209 are joined by a disulfide. The segment at 2181-2227 (CYFYQKTSDVFNSEGMYPSDGQGMQFVNCSTDHLTMFSVGAFNPTID) is GPS. The chain crosses the membrane as a helical span at residues 2245-2265 (VMIAAVFMLVVYGCLTINAII). The 124-residue stretch at 2288–2411 (YMYVIAVETG…GDGETERLAR (124 aa)) folds into the PLAT domain. The next 10 membrane-spanning stretches (helical) occupy residues 2453-2473 (DYSVSIIFSLVVVSMISITIL), 2496-2516 (IAFGVGFGVLITFLNSLHILL), 2557-2577 (IIVFPVLMGLIYISGAGMSLM), 2592-2612 (LILWAVVFEPIKGLIWAFLIL), 2672-2692 (LFITIRDMLCFFASLYIMVML), 2945-2965 (MLYIFFSVLIFVKEIVFYLYG), 2994-3014 (WNFMDLIVGALAVASVLAYTI), 3043-3063 (WEIVFSYCLAGAVFFTSCKMI), 3089-3109 (FGIAFLFFSMTFNSVLYAVLG), and 3144-3164 (FAFVVIMLYMIAGSKLVLQLY).

The protein belongs to the polycystin family. In terms of assembly, interacts (via PLAT domain) with atp-2 (via N-terminus) and with kin-10 (via C-terminus). Interacts (via C-terminus) with isoform a of stam-1/pqn-19 (via C-terminus). Autoproteolytically processed at the GPS region of the GAIN-B domain; this cleavage modulates receptor activity. As to expression, exclusively expressed in a subset of three categories of adult male sensory neurons: ray neurons, hook neurons and head cephalic (CEM) neurons.

It localises to the membrane. It is found in the cell projection. The protein resides in the cilium. Required for two aspects of male mating behavior: response to hermaphrodite contact and vulva location. Acts in the same pathway as pkd-2 and atp-2 in response behavior. May be required for ciliary targeting of pkd-2. This is Location of vulva defective 1 (lov-1) from Caenorhabditis elegans.